The sequence spans 439 residues: DNA 3'-5' translocase XPB2 (439 aa).

Residues 1 to 54 are DRD domain; the sequence is MVYLRYFKGLILSDAYAPGLKWSDELKAYSALAFKYRDVRKYFLEKEIEVEENV. The 145-residue stretch at 77-221 folds into the Helicase ATP-binding domain; it reads VKAWLKEKRG…LYPILVGPIV (145 aa). ATP is bound by residues 90–97 and arginine 127; that span reads LPTGAGKT. Positions 174–177 match the DEAH box motif; the sequence is DEVH. The RED motif signature appears at 205–207; sequence RDD. Positions 227–234 are flexible hinge region; that stretch reads EELAGKYI. Residues 248 to 307 form a thM region region; sequence NEEKKRYDGLRKKLKDFLSSRGLKLQNLDDFHRLVKLAAKDKEAREALLAWHESLNIAVN. In terms of domain architecture, Helicase C-terminal spans 311 to 439; the sequence is KIEKLREILQ…DYRLSRRRRE (129 aa).

It belongs to the helicase family. RAD25/XPB subfamily. As to quaternary structure, forms a heterodimer with Bax1.

It catalyses the reaction Couples ATP hydrolysis with the unwinding of duplex DNA by translocating in the 3'-5' direction.. The catalysed reaction is ATP + H2O = ADP + phosphate + H(+). ATP-dependent DNA translocase which moves along double-stranded DNA (dsDNA) in a 3'-5' direction, unwinding the DNA. The ThM domain grips the resulting 3'-ssDNA tail and functions as a wedge (particularly Phe-278), breaking dsDNA base pairs, probably using the energy from ATP hydrolysis to move along dsDNA. A DNA-dependent ATPase; double-stranded DNA (dsDNA) stimulates the activity more than single-stranded DNA (ssDNA), while Bax1 stimulates ATPase more. In an in vitro assay had no detectable helicase activity. Binds ssDNA better than dsDNA. Has very low ATPase activity that is stimulated by Bax1; dsDNA, Y-form DNA and a DNA substrate with a 6 base pair (bp) bubble in the center stimulate the XPB2-Bax1 ATPase activity about 10- 20-fold more than the absence of DNA. In an XPB2-Bax1-bubble DNA crystal (12 bp of dsDNA, a 6 base bubble and 6 bp of dsDNA) the short 6 bp arm is unwound. The 2 helicase and the ThM domains of XPB2 with the NTD and CRD domains of Bax1 encircle the DNA, forming a tunnel where the 12 bp dsDNA and the ds-ssDNA junction are located. The ThM domain is wedged between the ssDNA tails, with the 5' ssDNA contacting Bax1 and the 3' ssDNA in a channel in XPB2. Bax1 increases the affinity of XPB2 for forked DNA. The protein is DNA 3'-5' translocase XPB2 of Sulfurisphaera tokodaii (strain DSM 16993 / JCM 10545 / NBRC 100140 / 7) (Sulfolobus tokodaii).